The primary structure comprises 112 residues: Cell cycle protein GpsB (112 aa).

Positions Ile-38–Val-72 form a coiled coil.

The protein belongs to the GpsB family. In terms of assembly, forms polymers through the coiled coil domains. Interacts with PBP1, MreC and EzrA.

It is found in the cytoplasm. Functionally, divisome component that associates with the complex late in its assembly, after the Z-ring is formed, and is dependent on DivIC and PBP2B for its recruitment to the divisome. Together with EzrA, is a key component of the system that regulates PBP1 localization during cell cycle progression. Its main role could be the removal of PBP1 from the cell pole after pole maturation is completed. Also contributes to the recruitment of PBP1 to the division complex. Not essential for septum formation. This Bacillus cereus (strain ZK / E33L) protein is Cell cycle protein GpsB.